A 222-amino-acid polypeptide reads, in one-letter code: Ribonuclease HII (222 aa).

One can recognise an RNase H type-2 domain in the interval 32 to 222 (FHIAGVDEVG…LIKRYKEDIS (191 aa)). A divalent metal cation-binding residues include D38, E39, and D130.

The protein belongs to the RNase HII family. It depends on Mn(2+) as a cofactor. Mg(2+) serves as cofactor.

It localises to the cytoplasm. It carries out the reaction Endonucleolytic cleavage to 5'-phosphomonoester.. Endonuclease that specifically degrades the RNA of RNA-DNA hybrids. This Bartonella bacilliformis (strain ATCC 35685 / KC583 / Herrer 020/F12,63) protein is Ribonuclease HII.